The primary structure comprises 202 residues: Superoxide dismutase [Mn] (202 aa).

His-27 contacts Mn(2+). Thr-34 and Thr-70 each carry phosphothreonine. Positions 82, 164, and 168 each coordinate Mn(2+).

It belongs to the iron/manganese superoxide dismutase family. As to quaternary structure, homodimer; under aerobic conditions. Under anaerobic conditions it is a component of the so-called 'green protein' complex (GPC), which consists of at least two components, SodA and a nucleoside diphosphate kinase (NDK). The cofactor is Mn(2+).

The protein resides in the cytoplasm. The catalysed reaction is 2 superoxide + 2 H(+) = H2O2 + O2. In terms of biological role, destroys superoxide anion radicals which are normally produced within the cells and which are toxic to biological systems. Active only in homodimeric state. This chain is Superoxide dismutase [Mn] (sodA), found in Virgibacillus halodenitrificans (Bacillus halodenitrificans).